The following is a 222-amino-acid chain: Glutathione-specific gamma-glutamylcyclotransferase 1 (222 aa).

Positions 1-22 (MKQESAAPNTPPTSQSPTPSAQ) are enriched in low complexity. The tract at residues 1-24 (MKQESAAPNTPPTSQSPTPSAQFP) is disordered. Substrate is bound at residue 35 to 40 (IFGYGS). Glu-115 serves as the catalytic Proton acceptor.

Belongs to the gamma-glutamylcyclotransferase family. ChaC subfamily. As to quaternary structure, interacts with NOTCH1 (via extracellular region).

It localises to the cytoplasm. Its subcellular location is the cytosol. The protein resides in the golgi apparatus. The protein localises to the trans-Golgi network. The enzyme catalyses glutathione = L-cysteinylglycine + 5-oxo-L-proline. Its function is as follows. Catalyzes the cleavage of glutathione into 5-oxo-L-proline and a Cys-Gly dipeptide. Acts specifically on glutathione, but not on other gamma-glutamyl peptides. Glutathione depletion is an important factor for apoptosis initiation and execution. Acts as a pro-apoptotic component of the unfolded protein response pathway by mediating the pro-apoptotic effects of the ATF4-ATF3-DDIT3/CHOP cascade. Negative regulator of Notch signaling pathway involved in embryonic neurogenesis: acts by inhibiting Notch cleavage by furin, maintaining Notch in an immature inactive form, thereby promoting neurogenesis in embryos. This chain is Glutathione-specific gamma-glutamylcyclotransferase 1, found in Homo sapiens (Human).